The chain runs to 273 residues: 4-hydroxy-tetrahydrodipicolinate reductase (273 aa).

Residues 12–17 and glutamate 38 each bind NAD(+); that span reads GAGGRM. Residue arginine 39 coordinates NADP(+). NAD(+)-binding positions include 102 to 104 and 126 to 129; these read GTT and AANF. The active-site Proton donor/acceptor is the histidine 159. (S)-2,3,4,5-tetrahydrodipicolinate is bound at residue histidine 160. Lysine 163 (proton donor) is an active-site residue. Residue 169 to 170 participates in (S)-2,3,4,5-tetrahydrodipicolinate binding; it reads GT.

Belongs to the DapB family. In terms of assembly, homotetramer.

The protein resides in the cytoplasm. The enzyme catalyses (S)-2,3,4,5-tetrahydrodipicolinate + NAD(+) + H2O = (2S,4S)-4-hydroxy-2,3,4,5-tetrahydrodipicolinate + NADH + H(+). It catalyses the reaction (S)-2,3,4,5-tetrahydrodipicolinate + NADP(+) + H2O = (2S,4S)-4-hydroxy-2,3,4,5-tetrahydrodipicolinate + NADPH + H(+). The protein operates within amino-acid biosynthesis; L-lysine biosynthesis via DAP pathway; (S)-tetrahydrodipicolinate from L-aspartate: step 4/4. Catalyzes the conversion of 4-hydroxy-tetrahydrodipicolinate (HTPA) to tetrahydrodipicolinate. In Salmonella typhimurium (strain LT2 / SGSC1412 / ATCC 700720), this protein is 4-hydroxy-tetrahydrodipicolinate reductase.